The primary structure comprises 445 residues: Ribosomal protein uS12 methylthiotransferase RimO (445 aa).

One can recognise an MTTase N-terminal domain in the interval 10 to 120; it reads PKVGFVSLGC…VVNAVHEVVP (111 aa). Residues Cys19, Cys55, Cys84, Cys153, Cys157, and Cys160 each coordinate [4Fe-4S] cluster. The region spanning 139-378 is the Radical SAM core domain; it reads LTPRHYAYLK…AHQQAISSAR (240 aa). The 66-residue stretch at 380 to 445 folds into the TRAM domain; it reads QLRIGREIEV…DEYDLWAEQI (66 aa).

Belongs to the methylthiotransferase family. RimO subfamily. [4Fe-4S] cluster is required as a cofactor.

It localises to the cytoplasm. The enzyme catalyses L-aspartate(89)-[ribosomal protein uS12]-hydrogen + (sulfur carrier)-SH + AH2 + 2 S-adenosyl-L-methionine = 3-methylsulfanyl-L-aspartate(89)-[ribosomal protein uS12]-hydrogen + (sulfur carrier)-H + 5'-deoxyadenosine + L-methionine + A + S-adenosyl-L-homocysteine + 2 H(+). Catalyzes the methylthiolation of an aspartic acid residue of ribosomal protein uS12. The chain is Ribosomal protein uS12 methylthiotransferase RimO from Pseudomonas fluorescens (strain Pf0-1).